Here is a 493-residue protein sequence, read N- to C-terminus: Keratin, type II cuticular Hb3 (493 aa).

Positions 1–111 are head; sequence MTCGFSTVGS…PNAQCVKQEE (111 aa). The IF rod domain maps to 111 to 422; sequence EKEQIKCLNN…RLLEGEEQRL (312 aa). Residues 112 to 146 are coil 1A; it reads KEQIKCLNNRFAAFIDKVRFLEQQNKLLETKLQFY. Residues 147–156 form a linker 1 region; it reads QNRQCCESNL. Residues 157–257 form a coil 1B region; it reads EPLFEGYIET…YEEEIRVLQA (101 aa). A Glycyl lysine isopeptide (Lys-Gly) (interchain with G-Cter in SUMO1) cross-link involves residue lysine 217. The linker 12 stretch occupies residues 258-274; it reads NISDTSVIVKMDNSRGL. Positions 275-418 are coil 2; that stretch reads NMDNIVAEIK…ATYRRLLEGE (144 aa). Positions 419–493 are tail; the sequence is EQRLCEGVGA…GGGSCSLGRC (75 aa).

This sequence belongs to the intermediate filament family. Heterotetramer of two type I and two type II keratins.

This is Keratin, type II cuticular Hb3 from Bos taurus (Bovine).